The chain runs to 141 residues: Succinate dehydrogenase [ubiquinone] cytochrome b small subunit 2 (141 aa).

The transit peptide at methionine 1–threonine 24 directs the protein to the mitochondrion. The Mitochondrial matrix segment spans residues serine 25–phenylalanine 44. A helical membrane pass occupies residues lysine 45–phenylalanine 63. The Mitochondrial intermembrane segment spans residues isoleucine 64 to alanine 68. The chain crosses the membrane as a helical span at residues methionine 69–valine 89. Histidine 80 is a binding site for heme b. The Mitochondrial matrix portion of the chain corresponds to serine 90 to arginine 104. A ubiquinone is bound at residue tyrosine 92. Residues valine 105 to asparagine 126 form a helical membrane-spanning segment. Residues serine 127 to leucine 141 lie on the Mitochondrial intermembrane side of the membrane.

The protein belongs to the CybS family. In terms of assembly, component of the mitochondrial electron transport chain complex II composed of four subunits: a flavoprotein (Fp), an iron-sulfur protein (Ip), and a large cytochrome b (CybL) subunit and a small cytochrome b (CybS) subunit. There are 2 developmental stage-specific forms of complex II which have the Ip and CybL subunits in common. Complex II from the free-living larvae (aerobic environment) acts as a succinate dehydrogenase and is composed of the common subunit Ip and CybL and the stage specific subunits FpL and CybSL. Complex II from parasitic larvae and adults (anaerobic environment) acts as a fumarate reductase and is composed of the common subunit Ip and CybL and the stage specific subunits FpA and CybSA. Heme b is required as a cofactor.

The protein resides in the mitochondrion inner membrane. The protein operates within carbohydrate metabolism; tricarboxylic acid cycle; fumarate from succinate (eukaryal route): step 1/1. Membrane-bound small subunit (CybS) of the mitochondrial electron transport chain complex II, which together with the membrane-bound large subunit (CybL), anchor the catalytic subunits to the inner mitochondria membrane. During the free-living egg-larvae stages, which occur in an aerobic environment, complex II acts as a succinate dehydrogenase by transferring electrons from succinate to ubiquinone. The sequence is that of Succinate dehydrogenase [ubiquinone] cytochrome b small subunit 2 from Ascaris suum (Pig roundworm).